Reading from the N-terminus, the 206-residue chain is Small ribosomal subunit protein uS4 (206 aa).

The 61-residue stretch at 96-156 (GRLDNVVYRM…EKSKNQLRIQ (61 aa)) folds into the S4 RNA-binding domain.

It belongs to the universal ribosomal protein uS4 family. In terms of assembly, part of the 30S ribosomal subunit. Contacts protein S5. The interaction surface between S4 and S5 is involved in control of translational fidelity.

Functionally, one of the primary rRNA binding proteins, it binds directly to 16S rRNA where it nucleates assembly of the body of the 30S subunit. In terms of biological role, with S5 and S12 plays an important role in translational accuracy. This is Small ribosomal subunit protein uS4 from Saccharophagus degradans (strain 2-40 / ATCC 43961 / DSM 17024).